The following is a 2890-amino-acid chain: Bifunctional DNA-directed RNA polymerase subunit beta-beta' (2890 aa).

A DNA-directed RNA polymerase subunit beta region spans residues 1–1377 (MSKKIPLKNR…DINIFGDEMD (1377 aa)). Residues 1384–2890 (PIVIKEDDRP…LRTIEDSPKI (1507 aa)) form a DNA-directed RNA polymerase subunit beta' region. Residues cysteine 1449, cysteine 1451, cysteine 1465, and cysteine 1468 each contribute to the Zn(2+) site. Mg(2+) is bound by residues aspartate 1849, aspartate 1851, and aspartate 1853. Cysteine 2179, cysteine 2253, cysteine 2260, and cysteine 2263 together coordinate Zn(2+).

The protein in the N-terminal section; belongs to the RNA polymerase beta chain family. This sequence in the C-terminal section; belongs to the RNA polymerase beta' chain family. As to quaternary structure, the RNAP catalytic core consists of 2 alpha, 1 beta/beta' and 1 omega subunit. When a sigma factor is associated with the core the holoenzyme is formed, which can initiate transcription. Mg(2+) serves as cofactor. It depends on Zn(2+) as a cofactor.

It carries out the reaction RNA(n) + a ribonucleoside 5'-triphosphate = RNA(n+1) + diphosphate. Its function is as follows. DNA-dependent RNA polymerase catalyzes the transcription of DNA into RNA using the four ribonucleoside triphosphates as substrates. In Helicobacter acinonychis (strain Sheeba), this protein is Bifunctional DNA-directed RNA polymerase subunit beta-beta' (rpoBC).